Here is a 350-residue protein sequence, read N- to C-terminus: Dihydroorotase (350 aa).

His-13 and His-15 together coordinate Zn(2+). Substrate-binding positions include 15–17 and Asn-41; that span reads HLR. 3 residues coordinate Zn(2+): Lys-99, His-136, and His-174. N6-carboxylysine is present on Lys-99. Position 136 (His-136) interacts with substrate. Residue Leu-219 coordinates substrate. Zn(2+) is bound at residue Asp-247. Asp-247 is an active-site residue. The substrate site is built by His-251 and Ala-263.

Belongs to the metallo-dependent hydrolases superfamily. DHOase family. Class II DHOase subfamily. Homodimer. The cofactor is Zn(2+).

It carries out the reaction (S)-dihydroorotate + H2O = N-carbamoyl-L-aspartate + H(+). The protein operates within pyrimidine metabolism; UMP biosynthesis via de novo pathway; (S)-dihydroorotate from bicarbonate: step 3/3. Catalyzes the reversible cyclization of carbamoyl aspartate to dihydroorotate. The sequence is that of Dihydroorotase from Allorhizobium ampelinum (strain ATCC BAA-846 / DSM 112012 / S4) (Agrobacterium vitis (strain S4)).